A 263-amino-acid polypeptide reads, in one-letter code: Ycf3-interacting protein 1, chloroplastic (263 aa).

Residues 1–71 (MASNMLQLSL…VNKEEDSATY (71 aa)) constitute a chloroplast transit peptide. The helical transmembrane segment at 238 to 258 (ALYLVSAFPIIIGISVVLILF) threads the bilayer.

Belongs to the Y3IP1/CEST family. In terms of assembly, interacts with Ycf3.

It localises to the plastid. Its subcellular location is the chloroplast thylakoid membrane. Nuclear genome-encoded factor that participates in photosystem I (PSI) biogenesis. Cooperates with the plastid genome-encoded protein PSI assembly Ycf3 in the assembly of stable PSI units in the thylakoid membrane. The sequence is that of Ycf3-interacting protein 1, chloroplastic from Nicotiana tabacum (Common tobacco).